A 260-amino-acid polypeptide reads, in one-letter code: Shikimate dehydrogenase (260 aa).

The Proton acceptor role is filled by Lys71. 124–128 (GAGGA) is a binding site for NADP(+).

It belongs to the shikimate dehydrogenase family.

The enzyme catalyses shikimate + NADP(+) = 3-dehydroshikimate + NADPH + H(+). The protein operates within metabolic intermediate biosynthesis; chorismate biosynthesis; chorismate from D-erythrose 4-phosphate and phosphoenolpyruvate: step 4/7. This is Shikimate dehydrogenase (aroE) from Sulfurisphaera tokodaii (strain DSM 16993 / JCM 10545 / NBRC 100140 / 7) (Sulfolobus tokodaii).